Consider the following 481-residue polypeptide: Aspartyl/glutamyl-tRNA(Asn/Gln) amidotransferase subunit B (481 aa).

This sequence belongs to the GatB/GatE family. GatB subfamily. As to quaternary structure, heterotrimer of A, B and C subunits.

The catalysed reaction is L-glutamyl-tRNA(Gln) + L-glutamine + ATP + H2O = L-glutaminyl-tRNA(Gln) + L-glutamate + ADP + phosphate + H(+). The enzyme catalyses L-aspartyl-tRNA(Asn) + L-glutamine + ATP + H2O = L-asparaginyl-tRNA(Asn) + L-glutamate + ADP + phosphate + 2 H(+). Its function is as follows. Allows the formation of correctly charged Asn-tRNA(Asn) or Gln-tRNA(Gln) through the transamidation of misacylated Asp-tRNA(Asn) or Glu-tRNA(Gln) in organisms which lack either or both of asparaginyl-tRNA or glutaminyl-tRNA synthetases. The reaction takes place in the presence of glutamine and ATP through an activated phospho-Asp-tRNA(Asn) or phospho-Glu-tRNA(Gln). The sequence is that of Aspartyl/glutamyl-tRNA(Asn/Gln) amidotransferase subunit B from Marinomonas sp. (strain MWYL1).